The sequence spans 178 residues: Nucleoplasmin-3 (178 aa).

Position 2 is an N-acetylalanine (Ala-2). Ser-13 and Ser-16 each carry phosphoserine. Arg-27 carries the omega-N-methylarginine modification. Residues 141-178 are disordered; it reads TMSNDVSEEESEEEEEDSDEEEVELCPILPAKKQGGRP. Acidic residues predominate over residues 146-164; sequence VSEEESEEEEEDSDEEEVE. Phosphoserine occurs at positions 147, 151, and 158.

It belongs to the nucleoplasmin family. In terms of assembly, interacts with NPM (via N-terminus). Forms a pentamer with NPM at a ratio 4:1 (NPM3/NPM). Two pentamers form a decamer. Post-translationally, phosphorylated. Ubiquitous.

The protein localises to the nucleus. It localises to the nucleolus. Functionally, plays a role in the regulation of diverse cellular processes such as ribosome biogenesis, chromatin remodeling or protein chaperoning. Modulates the histone chaperone function and the RNA-binding activity of nucleolar phosphoprotein B23/NPM. Efficiently mediates chromatin remodeling when included in a pentamer containing NPM3 and NPM. In Homo sapiens (Human), this protein is Nucleoplasmin-3 (NPM3).